The primary structure comprises 182 residues: Ribosome-recycling factor (182 aa).

The tract at residues valine 136–serine 156 is disordered.

This sequence belongs to the RRF family.

The protein localises to the cytoplasm. Responsible for the release of ribosomes from messenger RNA at the termination of protein biosynthesis. May increase the efficiency of translation by recycling ribosomes from one round of translation to another. This is Ribosome-recycling factor from Synechococcus sp. (strain CC9902).